We begin with the raw amino-acid sequence, 196 residues long: Ribonuclease HII (196 aa).

The RNase H type-2 domain maps to 1 to 196; it reads MVTIGVDEAG…FAPVAQLQLL (196 aa). The a divalent metal cation site is built by Asp7, Glu8, and Asp103.

The protein belongs to the RNase HII family. The cofactor is Mn(2+). It depends on Mg(2+) as a cofactor.

The protein resides in the cytoplasm. The enzyme catalyses Endonucleolytic cleavage to 5'-phosphomonoester.. Endonuclease that specifically degrades the RNA of RNA-DNA hybrids. The chain is Ribonuclease HII from Novosphingobium aromaticivorans (strain ATCC 700278 / DSM 12444 / CCUG 56034 / CIP 105152 / NBRC 16084 / F199).